A 157-amino-acid polypeptide reads, in one-letter code: Protein Smg (157 aa).

It belongs to the Smg family.

The polypeptide is Protein Smg (Pectobacterium carotovorum subsp. carotovorum (strain PC1)).